Consider the following 380-residue polypeptide: Shaggy-related protein kinase eta (380 aa).

Residues tyrosine 40 to phenylalanine 324 form the Protein kinase domain. ATP is bound by residues valine 46–valine 54 and lysine 69. Threonine 104 carries the phosphothreonine modification. The residue at position 105 (serine 105) is a Phosphoserine. The active-site Proton acceptor is the aspartate 165. A Phosphoserine modification is found at serine 187. A Phosphotyrosine modification is found at tyrosine 200. Residues threonine 220 and threonine 261 each carry the phosphothreonine modification. Serine 310 carries the phosphoserine modification. Threonine 314 is subject to Phosphothreonine. The residue at position 353 (serine 353) is a Phosphoserine.

The protein belongs to the protein kinase superfamily. CMGC Ser/Thr protein kinase family. GSK-3 subfamily. Interacts in vitro with the C-terminal fragment of BZR1 and with BES1/BZR2, but not through the kinase domain. Interacts with BHLH150, beet curly top virus AL4/C4 and tomato golden mosaic virus AL4/AC4. Interacts with YDA. Interacts with MKK4. Interacts with KIB1 and KIB2 in a brassinosteroid (BR)-dependent manner. Interacts with BSK1, BSK6, BSK8 and BSK11. Binds to WRKY46, WRKY54 and WRKY70. Component of a complex made of POLAR, BASL, ASK7/BIN2 and ASK3/SK12. Binds to POLAR and BASL. In terms of processing, autophosphorylated mainly on threonine and serine residues. Ubiquitination and subsequent proteasomal degradation mediated by KIB1. In terms of tissue distribution, in the two outer cell layers of the developing seed coat and restricted to the suspensor cells in developing embryos. Mostly expressed in stomatal lineage cells with asymmetric cell division (ACD) potential. Observed in small cells of non-protruding hypocotyl cell files and of developing cotyledon epidermis.

It is found in the cytoplasm. Its subcellular location is the cell cortex. The protein localises to the nucleus. The protein resides in the cell membrane. The enzyme catalyses L-seryl-[protein] + ATP = O-phospho-L-seryl-[protein] + ADP + H(+). It carries out the reaction L-threonyl-[protein] + ATP = O-phospho-L-threonyl-[protein] + ADP + H(+). With respect to regulation, inactivated by an unknown mechanism after binding of brassinosteroids to the brassinosteroid receptor complex. Inhibited by lithium. Inhibited by dephosphorylation at Tyr-200 by BSU1. Competitive inhibition by KIB1 that reduces substrate (e.g. BZR1) access. Repressed by bikinin. In terms of biological role, negative regulator in brassinosteroid signal transduction pathway important for plant growth. May be also involved in auxin signaling pathway. Phosphorylates and increases the degradation of BZR1 and BZR2/BES1 by the proteasome. Phosphorylates BHLH150, beet curly top virus C4 and tomato golden mosaic virus AC4 on threonine and serine residues. Upon brassinosteroid signaling, inhibits stomatal development by phosphorylating and inhibiting the MAPKK kinase YDA and the MAPK kinases MKK4 and MKK5. Phosphorylates BSK1, BSK3, BSK5, BSK6, BSK8 and BSK11 in vitro. Phoyphorylates and destabilizes WRKY46, WRKY54 and WRKY70. Mediates BASL nuclear exclusion; kinase activity is required for this function. Required first at the cortical polarity site, to restrict MAPK signaling and promote asymmetric cell division (ACD), and second in the nucleus of stomatal lineage ground cells (SLGCs) or meristemoids, to limit cell division and to promote differentiation into pavement or stomatal guard cells, respectively, likely by initiating BASL polarization. Phosphorylates BASL, YDA and SPCH in vitro and POLAR in vivo. Phosphorylates and inhibits SPCH in the nucleus of SLGC undergoing ACD, thus negatively regulating stomatal development. The protein is Shaggy-related protein kinase eta of Arabidopsis thaliana (Mouse-ear cress).